The following is a 492-amino-acid chain: 2,3-bisphosphoglycerate-independent phosphoglycerate mutase (492 aa).

Mn(2+)-binding residues include Asp-11 and Ser-61. Ser-61 functions as the Phosphoserine intermediate in the catalytic mechanism. Residues His-118, 147–148 (RD), Arg-178, Arg-184, 248–251 (RNDR), and Lys-320 each bind substrate. Mn(2+) is bound by residues Asp-386, His-390, Asp-427, His-428, and His-445.

Belongs to the BPG-independent phosphoglycerate mutase family. As to quaternary structure, monomer. Mn(2+) is required as a cofactor.

The enzyme catalyses (2R)-2-phosphoglycerate = (2R)-3-phosphoglycerate. The protein operates within carbohydrate degradation; glycolysis; pyruvate from D-glyceraldehyde 3-phosphate: step 3/5. Its function is as follows. Catalyzes the interconversion of 2-phosphoglycerate and 3-phosphoglycerate. This is 2,3-bisphosphoglycerate-independent phosphoglycerate mutase from Campylobacter jejuni subsp. jejuni serotype O:2 (strain ATCC 700819 / NCTC 11168).